The sequence spans 201 residues: Large ribosomal subunit protein uL18 (201 aa).

The protein belongs to the universal ribosomal protein uL18 family. Part of the 50S ribosomal subunit. Contacts the 5S and 23S rRNAs.

Functionally, this is one of the proteins that bind and probably mediate the attachment of the 5S RNA into the large ribosomal subunit, where it forms part of the central protuberance. The sequence is that of Large ribosomal subunit protein uL18 from Thermococcus onnurineus (strain NA1).